Here is a 120-residue protein sequence, read N- to C-terminus: MWGYVHLISWVAIVVLTVTALLIYSKSVKGFTMLQMINRVFYILVILSGIMMVQYSVKESWILAIFKILMGIIVIGVVEMLLSYRKQQKPTGMFLMIFIIVVVITVSLGFYLSGGYPLFN.

4 consecutive transmembrane segments (helical) span residues 3 to 23 (GYVH…ALLI), 33 to 53 (MLQM…IMMV), 62 to 82 (ILAI…EMLL), and 92 to 112 (GMFL…GFYL).

It belongs to the UPF0344 family.

Its subcellular location is the cell membrane. In Listeria innocua serovar 6a (strain ATCC BAA-680 / CLIP 11262), this protein is UPF0344 protein lin2366.